Here is a 199-residue protein sequence, read N- to C-terminus: SCO2-like protein RC0042 (199 aa).

Belongs to the SCO1/2 family.

The sequence is that of SCO2-like protein RC0042 from Rickettsia conorii (strain ATCC VR-613 / Malish 7).